The sequence spans 240 residues: Uridylate kinase (240 aa).

Residue 13–16 (KISG) participates in ATP binding. Position 55 (G55) interacts with UMP. The ATP site is built by G56 and R60. UMP-binding positions include D75 and 136-143 (TGNPFFTT). The ATP site is built by T163, Q164, Y169, and D172.

Belongs to the UMP kinase family. Homohexamer.

It localises to the cytoplasm. It catalyses the reaction UMP + ATP = UDP + ADP. Its pathway is pyrimidine metabolism; CTP biosynthesis via de novo pathway; UDP from UMP (UMPK route): step 1/1. Its activity is regulated as follows. Inhibited by UTP. Its function is as follows. Catalyzes the reversible phosphorylation of UMP to UDP. This is Uridylate kinase from Paramagnetospirillum magneticum (strain ATCC 700264 / AMB-1) (Magnetospirillum magneticum).